Reading from the N-terminus, the 242-residue chain is MSGHSKWANIRHKKEKTDAQKGKIFSKLGRELMVVAKMYGPDPETNPKLRDVIAKAKANNMPMDKIMGFIKRAAGEIDTTGYEDITYEGYGPGGVAVIVEAMTNNRNRTAGEIRHIFDKNGGNLGQTGCVSWMFNRKGVIVIEKENFPDEDFVMEKALEYGAEDFASEEDVYEIITTPEDFSKVREGLEKEGFTFIRAQIEMIPQTTVRLSEEDAQKMRRLIDMLEDNDDVKEVYHNWEEEE.

Residues 1 to 20 (MSGHSKWANIRHKKEKTDAQ) form a disordered region.

Belongs to the TACO1 family.

It is found in the cytoplasm. The chain is Probable transcriptional regulatory protein Csac_0964 from Caldicellulosiruptor saccharolyticus (strain ATCC 43494 / DSM 8903 / Tp8T 6331).